Here is a 342-residue protein sequence, read N- to C-terminus: HTH-type transcriptional regulator GbpR (342 aa).

The region spanning 16 to 73 (LKLRHLQLFVALDEHRNLHRAAASLTMSQPAASKLLGDLEESLGVTLFERHGRGVEPN) is the HTH lysR-type domain. The segment at residues 33–52 (LHRAAASLTMSQPAASKLLG) is a DNA-binding region (H-T-H motif).

Belongs to the LysR transcriptional regulatory family.

Does not seem to be required for sbpA expression. The chain is HTH-type transcriptional regulator GbpR (gbpR) from Azospirillum brasilense.